The sequence spans 207 residues: NADH-quinone oxidoreductase subunit C (207 aa).

The protein belongs to the complex I 30 kDa subunit family. In terms of assembly, NDH-1 is composed of 14 different subunits. Subunits NuoB, C, D, E, F, and G constitute the peripheral sector of the complex.

The protein localises to the cell inner membrane. The catalysed reaction is a quinone + NADH + 5 H(+)(in) = a quinol + NAD(+) + 4 H(+)(out). NDH-1 shuttles electrons from NADH, via FMN and iron-sulfur (Fe-S) centers, to quinones in the respiratory chain. The immediate electron acceptor for the enzyme in this species is believed to be ubiquinone. Couples the redox reaction to proton translocation (for every two electrons transferred, four hydrogen ions are translocated across the cytoplasmic membrane), and thus conserves the redox energy in a proton gradient. This chain is NADH-quinone oxidoreductase subunit C, found in Thermus thermophilus (strain ATCC BAA-163 / DSM 7039 / HB27).